An 84-amino-acid polypeptide reads, in one-letter code: CDC42 small effector protein 2 (84 aa).

Residues C10 and C11 are each lipidated (S-palmitoyl cysteine). Residues 29–42 enclose the CRIB domain; the sequence is IGEPTNFVHTAHVG. Phosphoserine is present on residues S43 and S52.

Belongs to the CDC42SE/SPEC family. In terms of assembly, interacts with CDC42 (in GTP-bound form). Interacts weakly with RAC1 and not at all with RHOA.

It is found in the cytoplasm. Its subcellular location is the cytoskeleton. The protein localises to the cell membrane. The protein resides in the cell projection. It localises to the phagocytic cup. Its function is as follows. Probably involved in the organization of the actin cytoskeleton by acting downstream of CDC42, inducing actin filament assembly. Alters CDC42-induced cell shape changes. In activated T-cells, may play a role in CDC42-mediated F-actin accumulation at the immunological synapse. May play a role in early contractile events in phagocytosis in macrophages. In Bos taurus (Bovine), this protein is CDC42 small effector protein 2 (CDC42SE2).